Here is a 1023-residue protein sequence, read N- to C-terminus: Presequence protease, mitochondrial (1023 aa).

The transit peptide at 1–62 directs the protein to the mitochondrion; the sequence is MFRQSKTIIT…PDLFLTAVKL (62 aa). Residue His99 participates in Zn(2+) binding. Glu102 functions as the Proton acceptor in the catalytic mechanism. Zn(2+) is bound by residues His103 and Glu200. An intrachain disulfide couples Cys114 to Cys551.

This sequence belongs to the peptidase M16 family. PreP subfamily. Monomer and homodimer; homodimerization is induced by binding of the substrate. The cofactor is Zn(2+). A disulfide bond locks the enzyme in the closed conformation preventing substrate entry into the catalytic chamber.

The protein localises to the mitochondrion matrix. With respect to regulation, mainly exists in a closed and catalytically competent conformation but a closed-to-open switch allows substrate entry into the catalytic chamber. Substrate binding induces closure and dimerization. A disulfide bond may lock the enzyme in a closed conformation preventing substrate entry into the catalytic chamber, participating in redox regulation of the enzyme. Inhibited by metal-chelating agents. Inhibited by nickel and zinc excess, and slightly activated by manganese. Its function is as follows. Metalloendopeptidase of the mitochondrial matrix that functions in peptide cleavage and degradation rather than in protein processing. Has an ATP-independent activity. Specifically cleaves peptides in the range of 5 to 65 residues. Shows a preference for cleavage after small polar residues and before basic residues, but without any positional preference. Degrades the transit peptides of mitochondrial proteins after their cleavage. Also degrades other unstructured peptides. This chain is Presequence protease, mitochondrial (pitrm1), found in Danio rerio (Zebrafish).